Consider the following 501-residue polypeptide: Acyl-CoA-binding domain-containing protein 5A (501 aa).

One can recognise an ACB domain in the interval 9 to 98 (YEQRFNAAVK…LKLILESMPV (90 aa)). An acyl-CoA-binding positions include 20-29 (IQNLPPNGSF), 40-44 (YSYYK), Lys-66, and Tyr-85. Positions 173 to 405 (IDLEDREDDD…GERWGADGPM (233 aa)) are disordered. Residues 176–195 (EDREDDDDEDEEGERDEVEE) show a composition bias toward acidic residues. The segment covering 219-235 (SNGSISQHKGLSNGTHG) has biased composition (polar residues). Composition is skewed to basic and acidic residues over residues 236 to 254 (SKSD…HMNH), 266 to 283 (NSEK…HVAS), and 328 to 366 (RSQD…KRSD). The segment covering 376-389 (SRSPASGSGSAGPQ) has biased composition (low complexity). Residues 406-437 (TENLNEQIICALARLQDDMQSVLQRLHTLEAL) adopt a coiled-coil conformation. The helical transmembrane segment at 465–485 (WWPFDVSLGTVAFAVVWPFVV) threads the bilayer.

This sequence belongs to the ATG37 family.

Its subcellular location is the membrane. Functionally, acyl-CoA binding protein which acts as the peroxisome receptor for pexophagy but is dispensable for aggrephagy and nonselective autophagy. Binds medium- and long-chain acyl-CoA esters. This Danio rerio (Zebrafish) protein is Acyl-CoA-binding domain-containing protein 5A (acbd5a).